A 166-amino-acid polypeptide reads, in one-letter code: Transcription elongation factor GreA (166 aa).

Belongs to the GreA/GreB family.

Necessary for efficient RNA polymerase transcription elongation past template-encoded arresting sites. The arresting sites in DNA have the property of trapping a certain fraction of elongating RNA polymerases that pass through, resulting in locked ternary complexes. Cleavage of the nascent transcript by cleavage factors such as GreA or GreB allows the resumption of elongation from the new 3'terminus. GreA releases sequences of 2 to 3 nucleotides. The sequence is that of Transcription elongation factor GreA from Anaeromyxobacter sp. (strain K).